Reading from the N-terminus, the 128-residue chain is Large-conductance mechanosensitive channel (128 aa).

2 helical membrane-spanning segments follow: residues 11–31 and 70–90; these read FALK…AAFG and GAFI…FIFV.

The protein belongs to the MscL family. In terms of assembly, homopentamer.

Its subcellular location is the cell membrane. Functionally, channel that opens in response to stretch forces in the membrane lipid bilayer. May participate in the regulation of osmotic pressure changes within the cell. The polypeptide is Large-conductance mechanosensitive channel (Listeria monocytogenes serotype 4b (strain CLIP80459)).